Here is a 165-residue protein sequence, read N- to C-terminus: Inorganic pyrophosphatase (165 aa).

3 residues coordinate substrate: Lys21, Arg35, and Tyr47. 3 residues coordinate Mg(2+): Asp57, Asp62, and Asp94. Position 131 (Tyr131) interacts with substrate.

The protein belongs to the PPase family. As to quaternary structure, homotrimer. In presence of divalent cations the trimers aggregate to form a hexamer. Requires Mg(2+) as cofactor.

It is found in the cytoplasm. It carries out the reaction diphosphate + H2O = 2 phosphate + H(+). Functionally, catalyzes the hydrolysis of inorganic pyrophosphate (PPi) forming two phosphate ions. In Bacillus sp. (strain PS3), this protein is Inorganic pyrophosphatase.